A 240-amino-acid polypeptide reads, in one-letter code: Lactate utilization protein C (240 aa).

It belongs to the LutC/YkgG family.

Is involved in L-lactate degradation and allows cells to grow with lactate as the sole carbon source. The chain is Lactate utilization protein C from Bacillus pumilus (strain SAFR-032).